Here is a 439-residue protein sequence, read N- to C-terminus: Protein translocase subunit SecY (439 aa).

10 helical membrane passes run 28–48 (ILITVGLLILCRLGIFIPVPG), 73–93 (IFSGGGLSALGVFALGILPYI), 127–147 (LTRYVSLGWALLQSIVIAVWV), 156–176 (PLFTIQTALALVAGSMFVMWI), 179–199 (LITERGIGNGASLLIFLNIVA), 220–240 (VGGIVILLIVFLATIVGIVFV), 276–296 (GVMPIIFASAILVLPFSLANF), 318–338 (IYALFYLVLIVAFSYFYSSLI), 375–395 (LTILGAVFLGLVAIIPTAVEG), and 401–421 (TFQGFGATSLLILVGVAIDTA).

The protein belongs to the SecY/SEC61-alpha family. Component of the Sec protein translocase complex. Heterotrimer consisting of SecY, SecE and SecG subunits. The heterotrimers can form oligomers, although 1 heterotrimer is thought to be able to translocate proteins. Interacts with the ribosome. Interacts with SecDF, and other proteins may be involved. Interacts with SecA.

The protein localises to the cell inner membrane. It localises to the cellular thylakoid membrane. Its function is as follows. The central subunit of the protein translocation channel SecYEG. Consists of two halves formed by TMs 1-5 and 6-10. These two domains form a lateral gate at the front which open onto the bilayer between TMs 2 and 7, and are clamped together by SecE at the back. The channel is closed by both a pore ring composed of hydrophobic SecY resides and a short helix (helix 2A) on the extracellular side of the membrane which forms a plug. The plug probably moves laterally to allow the channel to open. The ring and the pore may move independently. This Synechococcus elongatus (strain ATCC 33912 / PCC 7942 / FACHB-805) (Anacystis nidulans R2) protein is Protein translocase subunit SecY.